The primary structure comprises 143 residues: uncharacterized protein (143 aa).

A mitochondrion-targeting transit peptide spans 1–38 (MKYWKYLSQLTIRRPLTYNNALLYRNRFPSILTWKRSA).

The protein localises to the mitochondrion. This is an uncharacterized protein from Schizosaccharomyces pombe (strain 972 / ATCC 24843) (Fission yeast).